A 135-amino-acid polypeptide reads, in one-letter code: Ribonuclease P protein component 2 (135 aa).

Belongs to the eukaryotic/archaeal RNase P protein component 2 family. Consists of a catalytic RNA component and at least 4-5 protein subunits.

Its subcellular location is the cytoplasm. It catalyses the reaction Endonucleolytic cleavage of RNA, removing 5'-extranucleotides from tRNA precursor.. Part of ribonuclease P, a protein complex that generates mature tRNA molecules by cleaving their 5'-ends. This is Ribonuclease P protein component 2 from Methanosarcina barkeri (strain Fusaro / DSM 804).